The sequence spans 181 residues: Crossover junction endodeoxyribonuclease RuvC (181 aa).

Residues Asp7, Glu67, and Asp139 contribute to the active site. Asp7, Glu67, and Asp139 together coordinate Mg(2+).

It belongs to the RuvC family. Homodimer which binds Holliday junction (HJ) DNA. The HJ becomes 2-fold symmetrical on binding to RuvC with unstacked arms; it has a different conformation from HJ DNA in complex with RuvA. In the full resolvosome a probable DNA-RuvA(4)-RuvB(12)-RuvC(2) complex forms which resolves the HJ. It depends on Mg(2+) as a cofactor.

The protein resides in the cytoplasm. The enzyme catalyses Endonucleolytic cleavage at a junction such as a reciprocal single-stranded crossover between two homologous DNA duplexes (Holliday junction).. Its function is as follows. The RuvA-RuvB-RuvC complex processes Holliday junction (HJ) DNA during genetic recombination and DNA repair. Endonuclease that resolves HJ intermediates. Cleaves cruciform DNA by making single-stranded nicks across the HJ at symmetrical positions within the homologous arms, yielding a 5'-phosphate and a 3'-hydroxyl group; requires a central core of homology in the junction. The consensus cleavage sequence is 5'-(A/T)TT(C/G)-3'. Cleavage occurs on the 3'-side of the TT dinucleotide at the point of strand exchange. HJ branch migration catalyzed by RuvA-RuvB allows RuvC to scan DNA until it finds its consensus sequence, where it cleaves and resolves the cruciform DNA. This is Crossover junction endodeoxyribonuclease RuvC from Cupriavidus metallidurans (strain ATCC 43123 / DSM 2839 / NBRC 102507 / CH34) (Ralstonia metallidurans).